Consider the following 473-residue polypeptide: MAAPSDPPTAATPPAPPPPARRCLLAPSVEPLLFLATLALGLQVPLATQYLWDRLGAERGYVGPNASSPHGCGNGSGAVDPLREEVEALVAHWNLCINLGGFFVGLFSVTLFGPWSDSVGRRPVLVLPAVGMAVQAAVYLLVMYLRLHVAYLLLGRIISGLLGDYNLILAGCFASVADSSNQRTRTFRVAILEACLGVAGMVASVGGGQWRKAEGYINPFWLVLAASLAAALYAALCLQETVKQRRAAKLLTLQHYKAVYKLYTAPEDLSSRRKLALYSLAFFLLVTVHFGTKDLYVLYELGSPLCWASDLIGYGSAASYLAYLSSLGGLRLLQLCLEDTWVAEIGLISNIAGLVVISLATTTPLMFTGYGIMFLSMAATPVIRAKLSKLVGETEQGALFASVACVEGLCSLVATGVFNSLYPSTLHFMRGFPFLFGAILLLIPAAIMGWIEIQDSNLQYSHFSDASSSPADG.

Residues 1-20 (MAAPSDPPTAATPPAPPPPA) show a composition bias toward pro residues. The tract at residues 1–21 (MAAPSDPPTAATPPAPPPPAR) is disordered. The Cytoplasmic segment spans residues 1-29 (MAAPSDPPTAATPPAPPPPARRCLLAPSV). The chain crosses the membrane as a helical span at residues 30-48 (EPLLFLATLALGLQVPLAT). Residues 49–90 (QYLWDRLGAERGYVGPNASSPHGCGNGSGAVDPLREEVEALV) are Extracellular-facing. Asn65 and Asn74 each carry an N-linked (GlcNAc...) asparagine glycan. Cysteines 72 and 306 form a disulfide. The chain crosses the membrane as a helical span at residues 91–116 (AHWNLCINLGGFFVGLFSVTLFGPWS). Residue Asn98 coordinates pemetrexed. At 117 to 120 (DSVG) the chain is on the cytoplasmic side. A helical transmembrane segment spans residues 121 to 143 (RRPVLVLPAVGMAVQAAVYLLVM). The Extracellular segment spans residues 144–148 (YLRLH). Residues 149 to 162 (VAYLLLGRIISGLL) traverse the membrane as a helical segment. Residues 163–185 (GDYNLILAGCFASVADSSNQRTR) are Cytoplasmic-facing. Asp164 and Glu193 together coordinate H(+). The helical transmembrane segment at 186–211 (TFRVAILEACLGVAGMVASVGGGQWR) threads the bilayer. Glu193 is a pemetrexed binding site. The Extracellular portion of the chain corresponds to 212–216 (KAEGY). Residues 217 to 235 (INPFWLVLAASLAAALYAA) form a helical membrane-spanning segment. The Cytoplasmic portion of the chain corresponds to 236-274 (LCLQETVKQRRAAKLLTLQHYKAVYKLYTAPEDLSSRRK). A helical transmembrane segment spans residues 275–297 (LALYSLAFFLLVTVHFGTKDLYV). His289 contributes to the H(+) binding site. The Extracellular portion of the chain corresponds to 298–310 (LYELGSPLCWASD). Residues 311–333 (LIGYGSAASYLAYLSSLGGLRLL) traverse the membrane as a helical segment. Tyr323 is a pemetrexed binding site. Over 334-339 (QLCLED) the chain is Cytoplasmic. The helical transmembrane segment at 340-359 (TWVAEIGLISNIAGLVVISL) threads the bilayer. The Extracellular segment spans residues 360–363 (ATTT). The helical transmembrane segment at 364–384 (PLMFTGYGIMFLSMAATPVIR) threads the bilayer. Topologically, residues 385–396 (AKLSKLVGETEQ) are cytoplasmic. Residues 397–422 (GALFASVACVEGLCSLVATGVFNSLY) traverse the membrane as a helical segment. Pemetrexed-binding residues include Glu407 and Ser411. At 423 to 430 (PSTLHFMR) the chain is on the extracellular side. Residues 431–449 (GFPFLFGAILLLIPAAIMG) traverse the membrane as a helical segment. Over 450 to 473 (WIEIQDSNLQYSHFSDASSSPADG) the chain is Cytoplasmic.

Belongs to the major facilitator superfamily. SLC46A family. As to quaternary structure, monomer. As to expression, widely expressed, including brain, aorta, liver, kidney, spleen, small intestine, pancreas, ovary and testis.

It localises to the cell membrane. It is found in the apical cell membrane. The protein localises to the basolateral cell membrane. Its subcellular location is the endosome membrane. The protein resides in the cytoplasm. The enzyme catalyses folate(in) + H(+)(in) = folate(out) + H(+)(out). The catalysed reaction is (6S)-5-methyl-5,6,7,8-tetrahydrofolate(in) + H(+)(in) = (6S)-5-methyl-5,6,7,8-tetrahydrofolate(out) + H(+)(out). It carries out the reaction methotrexate(in) + H(+)(in) = methotrexate(out) + H(+)(out). It catalyses the reaction pemetrexed(in) + H(+)(in) = pemetrexed(out) + H(+)(out). In terms of biological role, proton-coupled folate symporter that mediates folate absorption using an H(+) gradient as a driving force. Involved in the intestinal absorption of folates at the brush-border membrane of the proximal jejunum, and the transport from blood to cerebrospinal fluid across the choroid plexus. Functions at acidic pH via alternate outward- and inward-open conformation states. Protonation of residues in the outward open state primes the protein for transport. Binding of folate promotes breaking of salt bridge network and subsequent closure of the extracellular gate, leading to the inward-open state and release of protons and folate. Also able to transport antifolate drugs, such as methotrexate and pemetrexed. Also acts as a lower-affinity, pH-independent heme carrier protein and constitutes the main importer of heme in the intestine. Imports heme in the retina and retinal pigment epithelium, in neurons of the hippocampus, in hepatocytes and in the renal epithelial cells. In Gallus gallus (Chicken), this protein is Proton-coupled folate transporter.